Reading from the N-terminus, the 216-residue chain is Pyrrolidone-carboxylate peptidase (216 aa).

Catalysis depends on residues glutamate 80, cysteine 143, and histidine 167.

Belongs to the peptidase C15 family. In terms of assembly, homotetramer.

It is found in the cytoplasm. The enzyme catalyses Release of an N-terminal pyroglutamyl group from a polypeptide, the second amino acid generally not being Pro.. Its function is as follows. Removes 5-oxoproline from various penultimate amino acid residues except L-proline. This Streptomyces coelicolor (strain ATCC BAA-471 / A3(2) / M145) protein is Pyrrolidone-carboxylate peptidase (pcp).